The following is a 341-amino-acid chain: Aromatic amino acid aminotransferase (341 aa).

Lysine 213 carries the post-translational modification N6-(pyridoxal phosphate)lysine.

This sequence belongs to the class-II pyridoxal-phosphate-dependent aminotransferase family. As to quaternary structure, homodimer. Pyridoxal 5'-phosphate is required as a cofactor.

The catalysed reaction is an aromatic L-alpha-amino acid + 2-oxoglutarate = an aromatic oxo-acid + L-glutamate. Aminotransferase that catalyzes the conversion of aromatic amino acids and 2-oxoglutarate into corresponding aromatic oxo acids and L-glutamate. May catalyze the transamination reaction in phenylalanine biosynthesis. This is Aromatic amino acid aminotransferase from Corynebacterium glutamicum (strain ATCC 13032 / DSM 20300 / JCM 1318 / BCRC 11384 / CCUG 27702 / LMG 3730 / NBRC 12168 / NCIMB 10025 / NRRL B-2784 / 534).